The chain runs to 282 residues: PAK4-inhibitor INKA1 (282 aa).

Disordered regions lie at residues 21–50 and 92–127; these read RDTG…QFRA and GFSE…FSVS. Inka box stretches follow at residues 163–200 and 256–282; these read EAED…ELPE and PADI…VSYL.

The protein belongs to the INKA family. Interacts with PAK4. Expressed in tissues of the developing head during neurulation.

The protein localises to the nucleus. It localises to the cytoplasm. In terms of biological role, inhibitor of the serine/threonine-protein kinase PAK4. Acts by binding PAK4 in a substrate-like manner, inhibiting the protein kinase activity. The sequence is that of PAK4-inhibitor INKA1 from Mus musculus (Mouse).